The chain runs to 70 residues: DNA gyrase inhibitor YacG (70 aa).

Residues cysteine 9, cysteine 12, cysteine 28, and cysteine 32 each contribute to the Zn(2+) site. The segment at 43 to 70 is disordered; the sequence is ESRKIPGSSIDPESIVTTNNKQDNVDEQ.

This sequence belongs to the DNA gyrase inhibitor YacG family. Interacts with GyrB. Requires Zn(2+) as cofactor.

Functionally, inhibits all the catalytic activities of DNA gyrase by preventing its interaction with DNA. Acts by binding directly to the C-terminal domain of GyrB, which probably disrupts DNA binding by the gyrase. In Legionella pneumophila (strain Corby), this protein is DNA gyrase inhibitor YacG.